A 306-amino-acid chain; its full sequence is Hydroxypyruvate reductase (306 aa).

NAD(+) is bound by residues 152 to 153, aspartate 172, 228 to 230, and aspartate 254; these read NI and TAR. Residue arginine 230 is part of the active site. Glutamate 259 is an active-site residue. Histidine 280 functions as the Proton donor in the catalytic mechanism. 280 to 283 contributes to the NAD(+) binding site; that stretch reads HIGA.

Belongs to the D-isomer specific 2-hydroxyacid dehydrogenase family.

The catalysed reaction is (R)-glycerate + NAD(+) = 3-hydroxypyruvate + NADH + H(+). It carries out the reaction (R)-glycerate + NADP(+) = 3-hydroxypyruvate + NADPH + H(+). Functionally, involved in the degradation of L-serine via 3-hydroxypyruvate. Catalyzes the non-reversible reduction of 3-hydroxypyruvate to yield D-glycerate. The sequence is that of Hydroxypyruvate reductase from Thermotoga maritima (strain ATCC 43589 / DSM 3109 / JCM 10099 / NBRC 100826 / MSB8).